Consider the following 415-residue polypeptide: ATP-dependent RNA helicase RhlB (415 aa).

The Q motif motif lies at 9-37; that stretch reads KKFSDFALYPPIVEVLDSKGFNNCTPIQA. Positions 40–219 constitute a Helicase ATP-binding domain; sequence LPTTLAGKDV…FEHMNNAEYV (180 aa). Residue 53-60 participates in ATP binding; that stretch reads AQTGTGKT. A DEAD box motif is present at residues 165–168; the sequence is DEAD. The Helicase C-terminal domain maps to 245–390; sequence RLLQTLIEEE…VSKYNSDALL (146 aa). The segment at 396 to 415 is disordered; that stretch reads PKRLTRRRSGAPRHNRKRPG. Residues 398–415 are compositionally biased toward basic residues; it reads RLTRRRSGAPRHNRKRPG.

This sequence belongs to the DEAD box helicase family. RhlB subfamily. Component of the RNA degradosome, which is a multiprotein complex involved in RNA processing and mRNA degradation.

The protein resides in the cytoplasm. It carries out the reaction ATP + H2O = ADP + phosphate + H(+). In terms of biological role, DEAD-box RNA helicase involved in RNA degradation. Has RNA-dependent ATPase activity and unwinds double-stranded RNA. In Sodalis glossinidius (strain morsitans), this protein is ATP-dependent RNA helicase RhlB.